The primary structure comprises 84 residues: Cell division topological specificity factor (84 aa).

This sequence belongs to the MinE family.

In terms of biological role, prevents the cell division inhibition by proteins MinC and MinD at internal division sites while permitting inhibition at polar sites. This ensures cell division at the proper site by restricting the formation of a division septum at the midpoint of the long axis of the cell. The chain is Cell division topological specificity factor from Ectopseudomonas mendocina (strain ymp) (Pseudomonas mendocina).